The chain runs to 101 residues: Small ribosomal subunit protein uS14 (101 aa).

Positions 53–72 (RDAAAVRVRNRDSHDGRPRG) are disordered. Residues 61–70 (RNRDSHDGRP) are compositionally biased toward basic and acidic residues.

This sequence belongs to the universal ribosomal protein uS14 family. As to quaternary structure, part of the 30S ribosomal subunit. Contacts proteins S3 and S10.

Its function is as follows. Binds 16S rRNA, required for the assembly of 30S particles and may also be responsible for determining the conformation of the 16S rRNA at the A site. In Corynebacterium glutamicum (strain R), this protein is Small ribosomal subunit protein uS14.